A 388-amino-acid chain; its full sequence is Formate-dependent phosphoribosylglycinamide formyltransferase (388 aa).

Residues 11-12 (EL) and Glu-71 each bind N(1)-(5-phospho-beta-D-ribosyl)glycinamide. ATP is bound by residues Arg-103, Lys-144, 149-154 (SSGKGQ), 184-187 (EEFI), and Glu-192. The 193-residue stretch at 108-300 (DLAAKELGLK…EFELHLRAVL (193 aa)) folds into the ATP-grasp domain. 2 residues coordinate Mg(2+): Glu-257 and Glu-270. Residues Asp-277, Lys-349, and 356-357 (RR) contribute to the N(1)-(5-phospho-beta-D-ribosyl)glycinamide site.

The protein belongs to the PurK/PurT family. Homodimer.

The catalysed reaction is N(1)-(5-phospho-beta-D-ribosyl)glycinamide + formate + ATP = N(2)-formyl-N(1)-(5-phospho-beta-D-ribosyl)glycinamide + ADP + phosphate + H(+). The protein operates within purine metabolism; IMP biosynthesis via de novo pathway; N(2)-formyl-N(1)-(5-phospho-D-ribosyl)glycinamide from N(1)-(5-phospho-D-ribosyl)glycinamide (formate route): step 1/1. Functionally, involved in the de novo purine biosynthesis. Catalyzes the transfer of formate to 5-phospho-ribosyl-glycinamide (GAR), producing 5-phospho-ribosyl-N-formylglycinamide (FGAR). Formate is provided by PurU via hydrolysis of 10-formyl-tetrahydrofolate. This chain is Formate-dependent phosphoribosylglycinamide formyltransferase, found in Bacteroides thetaiotaomicron (strain ATCC 29148 / DSM 2079 / JCM 5827 / CCUG 10774 / NCTC 10582 / VPI-5482 / E50).